Consider the following 728-residue polypeptide: Catalase-peroxidase (728 aa).

Residues 1-26 are disordered; that stretch reads MDNPTDTAGKCPVAHGNKPRGPSNRD. A cross-link (tryptophyl-tyrosyl-methioninium (Trp-Tyr) (with M-244)) is located at residues 96–218; sequence WHSAGTYRIT…LGAVQMGLIY (123 aa). Residue histidine 97 is the Proton acceptor of the active site. Positions 218-244 form a cross-link, tryptophyl-tyrosyl-methioninium (Tyr-Met) (with W-96); that stretch reads YVNPEGPNGNPDPVAAARDIRETFARM. Histidine 259 contributes to the heme b binding site.

This sequence belongs to the peroxidase family. Peroxidase/catalase subfamily. In terms of assembly, homodimer or homotetramer. Heme b is required as a cofactor. Formation of the three residue Trp-Tyr-Met cross-link is important for the catalase, but not the peroxidase activity of the enzyme.

It carries out the reaction H2O2 + AH2 = A + 2 H2O. The catalysed reaction is 2 H2O2 = O2 + 2 H2O. In terms of biological role, bifunctional enzyme with both catalase and broad-spectrum peroxidase activity. Important for stationary phase survival. The sequence is that of Catalase-peroxidase from Rhizobium etli (strain ATCC 51251 / DSM 11541 / JCM 21823 / NBRC 15573 / CFN 42).